An 840-amino-acid polypeptide reads, in one-letter code: Leucine--tRNA ligase (840 aa).

The 'HIGH' region signature appears at 44 to 55 (PYPSANGLHVGH). The short motif at 617-621 (KMSKS) is the 'KMSKS' region element. K620 provides a ligand contact to ATP.

The protein belongs to the class-I aminoacyl-tRNA synthetase family.

The protein resides in the cytoplasm. It catalyses the reaction tRNA(Leu) + L-leucine + ATP = L-leucyl-tRNA(Leu) + AMP + diphosphate. This Borreliella burgdorferi (strain ATCC 35210 / DSM 4680 / CIP 102532 / B31) (Borrelia burgdorferi) protein is Leucine--tRNA ligase.